The primary structure comprises 541 residues: uncharacterized protein (541 aa).

Helical transmembrane passes span 57-77 (LVVT…TIAI), 90-110 (LTFG…SYAL), 144-164 (VGHL…YGLI), 167-187 (AFIP…ATAT), 221-241 (MVVW…MAMF), and 257-277 (VLII…ILAW). In terms of domain architecture, HAMP spans 278–329 (LTATPVRVVRAALRRVERGELRTNLVVFDGTELGELQRGFNAMVAGLRERER). One can recognise a Guanylate cyclase domain in the interval 361–485 (AVVFIDIVGS…EPVNEAARLC (125 aa)).

It belongs to the adenylyl cyclase class-3 family.

Its subcellular location is the cell membrane. This is an uncharacterized protein from Mycobacterium tuberculosis (strain CDC 1551 / Oshkosh).